The chain runs to 204 residues: Large ribosomal subunit protein eL15 (204 aa).

It belongs to the eukaryotic ribosomal protein eL15 family. As to quaternary structure, component of the large ribosomal subunit.

Its subcellular location is the cytoplasm. Component of the large ribosomal subunit. The ribosome is a large ribonucleoprotein complex responsible for the synthesis of proteins in the cell. The polypeptide is Large ribosomal subunit protein eL15 (rpl15) (Silurus meridionalis (Southern catfish)).